Here is a 238-residue protein sequence, read N- to C-terminus: 2-phytyl-1,4-naphtoquinone methyltransferase (238 aa).

The protein belongs to the class I-like SAM-binding methyltransferase superfamily. MenG/UbiE family.

It carries out the reaction demethylphylloquinol + S-adenosyl-L-methionine = phylloquinol + S-adenosyl-L-homocysteine + H(+). Its pathway is cofactor biosynthesis; phylloquinone biosynthesis. Its function is as follows. Methyltransferase required for the conversion of 2-phytyl-1,4-beta-naphthoquinol to phylloquinol. This chain is 2-phytyl-1,4-naphtoquinone methyltransferase, found in Synechocystis sp. (strain ATCC 27184 / PCC 6803 / Kazusa).